We begin with the raw amino-acid sequence, 287 residues long: rRNA adenine N-6-methyltransferase (287 aa).

Over residues 1-13 (MKKKNHKYRGKKL) the composition is skewed to basic residues. The interval 1 to 21 (MKKKNHKYRGKKLNRGESPNF) is disordered. Positions 25, 27, 52, 73, 98, and 114 each coordinate S-adenosyl-L-methionine.

This sequence belongs to the class I-like SAM-binding methyltransferase superfamily. rRNA adenine N(6)-methyltransferase family.

Functionally, involved in erythromycin resistance. The polypeptide is rRNA adenine N-6-methyltransferase (ermD) (Bacillus licheniformis).